Reading from the N-terminus, the 212-residue chain is Probable chemoreceptor glutamine deamidase CheD (212 aa).

It belongs to the CheD family.

It catalyses the reaction L-glutaminyl-[protein] + H2O = L-glutamyl-[protein] + NH4(+). Probably deamidates glutamine residues to glutamate on methyl-accepting chemotaxis receptors (MCPs), playing an important role in chemotaxis. This chain is Probable chemoreceptor glutamine deamidase CheD, found in Bordetella parapertussis (strain 12822 / ATCC BAA-587 / NCTC 13253).